We begin with the raw amino-acid sequence, 98 residues long: NADH-ubiquinone oxidoreductase chain 4L (98 aa).

A run of 3 helical transmembrane segments spans residues 1-21 (MSLT…GLLM), 29-49 (SLLC…VIIL), and 61-81 (IILL…LVMV).

The protein belongs to the complex I subunit 4L family. In terms of assembly, core subunit of respiratory chain NADH dehydrogenase (Complex I) which is composed of 45 different subunits.

It localises to the mitochondrion inner membrane. The catalysed reaction is a ubiquinone + NADH + 5 H(+)(in) = a ubiquinol + NAD(+) + 4 H(+)(out). Its function is as follows. Core subunit of the mitochondrial membrane respiratory chain NADH dehydrogenase (Complex I) which catalyzes electron transfer from NADH through the respiratory chain, using ubiquinone as an electron acceptor. Part of the enzyme membrane arm which is embedded in the lipid bilayer and involved in proton translocation. The protein is NADH-ubiquinone oxidoreductase chain 4L (MT-ND4L) of Uroderma bilobatum (Tent-making bat).